Reading from the N-terminus, the 78-residue chain is Gas vesicle protein A (78 aa).

This sequence belongs to the gas vesicle GvpA family. In terms of assembly, the gas vesicle shell is 2 nm thick and consists of a single layer of this protein. It forms helical ribs nearly perpendicular to the long axis of the vesicle.

The protein localises to the gas vesicle shell. Gas vesicles are hollow, gas filled proteinaceous nanostructures found in some microorganisms. During planktonic growth they allow positioning of the organism at a favorable depth for light or nutrient acquisition. GvpA forms the protein shell. The chain is Gas vesicle protein A from Halorubrum vacuolatum (Natronobacterium vacuolatum).